The following is a 151-amino-acid chain: Aspartate carbamoyltransferase regulatory chain (151 aa).

Zn(2+) contacts are provided by Cys107, Cys112, Cys135, and Cys138.

Belongs to the PyrI family. In terms of assembly, contains catalytic and regulatory chains. The cofactor is Zn(2+).

Its function is as follows. Involved in allosteric regulation of aspartate carbamoyltransferase. This is Aspartate carbamoyltransferase regulatory chain from Psychromonas ingrahamii (strain DSM 17664 / CCUG 51855 / 37).